The chain runs to 695 residues: Putative pentatricopeptide repeat-containing protein At1g77010, mitochondrial (695 aa).

A mitochondrion-targeting transit peptide spans 1–64 (MILKYNSSYR…KGFLSSIVIV (64 aa)). PPR repeat units follow at residues 61-91 (IVIVANHLLQMYSRSGKMGIARNLFDEMPDR), 92-122 (NYFSWNTMIEGYMNSGEKGTSLRFFDMMPER), 123-157 (DGYSWNVVVSGFAKAGELSVARRLFNAMPEKDVVT), 159-184 (NSLLHGYILNGYAEEALRLFKELNFS), 186-220 (DAITLTTVLKACAELEALKCGKQIHAQILIGGVEC), 221-251 (DSKMNSSLVNVYAKCGDLRMASYMLEQIREP), 252-282 (DDHSLSALISGYANCGRVNESRGLFDRKSNR), 283-313 (CVILWNSMISGYIANNMKMEALVLFNEMRNE), 317-351 (DSRTLAAVINACIGLGFLETGKQMHCHACKFGLID), 352-382 (DIVVASTLLDMYSKCGSPMEACKLFSEVESY), 383-417 (DTILLNSMIKVYFSCGRIDDAKRVFERIENKSLIS), 418-448 (WNSMTNGFSQNGCTVETLEYFHQMHKLDLPT), 449-483 (DEVSLSSVISACASISSLELGEQVFARATIVGLDS), 484-514 (DQVVSSSLIDLYCKCGFVEHGRRVFDTMVKS), 515-549 (DEVPWNSMISGYATNGQGFEAIDLFKKMSVAGIRP), 550-585 (TQITFMVVLTACNYCGLVEEGRKLFESMKVDHGFVP), and 586-616 (DKEHFSCMVDLLARAGYVEEAINLVEEMPFD). The type E motif; degenerate stretch occupies residues 621 to 695 (MWSSILRGCV…KNPGSSWTDC (75 aa)).

This sequence belongs to the PPR family. PCMP-E subfamily.

It is found in the mitochondrion. This is Putative pentatricopeptide repeat-containing protein At1g77010, mitochondrial (PCMP-E5) from Arabidopsis thaliana (Mouse-ear cress).